The chain runs to 159 residues: MQQGWLSNWLVKHDVVHRSLGFDHRGVETLQIKAGDWDSIAVILYVYGYNYLRSQCAYDVAPGGSLASVYHLTRIQYGIDNPEEVCIKVFAQKDNPRIPSVFWVWRSADFQERESYDMVGISYDNHPRLKRILMPESWIGWPLRKDYITPNFYEIQDAH.

The protein belongs to the complex I 30 kDa subunit family. NDH is composed of at least 16 different subunits, 5 of which are encoded in the nucleus. Leaves.

It localises to the plastid. It is found in the chloroplast thylakoid membrane. It carries out the reaction a plastoquinone + NADH + (n+1) H(+)(in) = a plastoquinol + NAD(+) + n H(+)(out). The catalysed reaction is a plastoquinone + NADPH + (n+1) H(+)(in) = a plastoquinol + NADP(+) + n H(+)(out). Functionally, NDH shuttles electrons from NAD(P)H:plastoquinone, via FMN and iron-sulfur (Fe-S) centers, to quinones in the photosynthetic chain and possibly in a chloroplast respiratory chain. The immediate electron acceptor for the enzyme in this species is believed to be plastoquinone. Couples the redox reaction to proton translocation, and thus conserves the redox energy in a proton gradient. In Zea mays (Maize), this protein is NAD(P)H-quinone oxidoreductase subunit J, chloroplastic.